We begin with the raw amino-acid sequence, 144 residues long: Acidic phospholipase A2 S15-109 (144 aa).

The N-terminal stretch at 1-19 (MYPAHLLVLLAVCVSLLGA) is a signal peptide. The propeptide occupies 20 to 27 (SDIPPQPL). 7 disulfides stabilise this stretch: Cys-38–Cys-98, Cys-54–Cys-143, Cys-56–Cys-72, Cys-71–Cys-126, Cys-78–Cys-119, Cys-87–Cys-112, and Cys-105–Cys-117. Residues Tyr-55, Gly-57, and Gly-59 each contribute to the Ca(2+) site. His-75 is an active-site residue. Asp-76 lines the Ca(2+) pocket. Asp-120 is an active-site residue.

The protein belongs to the phospholipase A2 family. Group I subfamily. D49 sub-subfamily. The cofactor is Ca(2+). In terms of tissue distribution, expressed by the venom gland.

It localises to the secreted. It carries out the reaction a 1,2-diacyl-sn-glycero-3-phosphocholine + H2O = a 1-acyl-sn-glycero-3-phosphocholine + a fatty acid + H(+). Functionally, snake venom phospholipase A2 (PLA2) that inhibits collagen-induced platelet aggregation. PLA2 catalyzes the calcium-dependent hydrolysis of the 2-acyl groups in 3-sn-phosphoglycerides. The chain is Acidic phospholipase A2 S15-109 from Austrelaps superbus (Lowland copperhead snake).